The chain runs to 596 residues: Actin-histidine N-methyltransferase (596 aa).

Residues Arg75, 104–106, Arg254, 275–279, and 325–327 contribute to the S-adenosyl-L-methionine site; these read EGY, DMCNH, and NGF. Residues 94 to 314 enclose the SET domain; that stretch reads DGFEISNFAD…EGEQIYIFYG (221 aa). Residues 556 to 596 are disordered; the sequence is QCKDLNGTQEDPPGGGAVVKEIEKHDPSAKRTEGEPKDAGK. A compositionally biased stretch (basic and acidic residues) spans 575-596; it reads KEIEKHDPSAKRTEGEPKDAGK.

Belongs to the class V-like SAM-binding methyltransferase superfamily. SETD3 actin-histidine methyltransferase family.

It localises to the cytoplasm. It carries out the reaction L-histidyl-[protein] + S-adenosyl-L-methionine = N(tele)-methyl-L-histidyl-[protein] + S-adenosyl-L-homocysteine + H(+). Its function is as follows. Protein-histidine N-methyltransferase that specifically mediates 3-methylhistidine (tele-methylhistidine) methylation of actin at 'His-73'. Does not have protein-lysine N-methyltransferase activity and probably only catalyzes histidine methylation of actin. This chain is Actin-histidine N-methyltransferase, found in Danio rerio (Zebrafish).